A 39-amino-acid polypeptide reads, in one-letter code: Photosystem II reaction center protein L (39 aa).

A helical membrane pass occupies residues 18 to 38 (SLYLGLLSVLVLGILFSSYFF).

The protein belongs to the PsbL family. PSII is composed of 1 copy each of membrane proteins PsbA, PsbB, PsbC, PsbD, PsbE, PsbF, PsbH, PsbI, PsbJ, PsbK, PsbL, PsbM, PsbT, PsbX, PsbY, Psb30/Ycf12, peripheral proteins PsbO, CyanoQ (PsbQ), PsbU, PsbV and a large number of cofactors. It forms dimeric complexes.

The protein localises to the cellular thylakoid membrane. In terms of biological role, one of the components of the core complex of photosystem II (PSII). PSII is a light-driven water:plastoquinone oxidoreductase that uses light energy to abstract electrons from H(2)O, generating O(2) and a proton gradient subsequently used for ATP formation. It consists of a core antenna complex that captures photons, and an electron transfer chain that converts photonic excitation into a charge separation. This subunit is found at the monomer-monomer interface and is required for correct PSII assembly and/or dimerization. The polypeptide is Photosystem II reaction center protein L (Prochlorococcus marinus subsp. pastoris (strain CCMP1986 / NIES-2087 / MED4)).